The primary structure comprises 390 residues: Phosphoglycerate kinase (390 aa).

Residues 19–21, Arg34, 57–60, Arg115, and Arg148 each bind substrate; these read DYN and HLGR. ATP-binding positions include Lys198, Gly289, Glu320, and 347 to 350; that span reads GGDS.

This sequence belongs to the phosphoglycerate kinase family. In terms of assembly, monomer.

It is found in the cytoplasm. The enzyme catalyses (2R)-3-phosphoglycerate + ATP = (2R)-3-phospho-glyceroyl phosphate + ADP. It functions in the pathway carbohydrate degradation; glycolysis; pyruvate from D-glyceraldehyde 3-phosphate: step 2/5. This is Phosphoglycerate kinase from Thermus thermophilus (strain ATCC BAA-163 / DSM 7039 / HB27).